The chain runs to 254 residues: Methylthioribulose-1-phosphate dehydratase (254 aa).

Residue Cys-110 participates in substrate binding. Residues His-127 and His-129 each coordinate Zn(2+). The active-site Proton donor/acceptor is Glu-156. His-212 lines the Zn(2+) pocket.

The protein belongs to the aldolase class II family. MtnB subfamily. Zn(2+) is required as a cofactor.

It localises to the cytoplasm. The catalysed reaction is 5-(methylsulfanyl)-D-ribulose 1-phosphate = 5-methylsulfanyl-2,3-dioxopentyl phosphate + H2O. The protein operates within amino-acid biosynthesis; L-methionine biosynthesis via salvage pathway; L-methionine from S-methyl-5-thio-alpha-D-ribose 1-phosphate: step 2/6. In terms of biological role, catalyzes the dehydration of methylthioribulose-1-phosphate (MTRu-1-P) into 2,3-diketo-5-methylthiopentyl-1-phosphate (DK-MTP-1-P). The protein is Methylthioribulose-1-phosphate dehydratase of Talaromyces marneffei (strain ATCC 18224 / CBS 334.59 / QM 7333) (Penicillium marneffei).